We begin with the raw amino-acid sequence, 607 residues long: UvrABC system protein C (607 aa).

The GIY-YIG domain occupies 15 to 92 (SQPGSYQMKD…IKRYRPYFNI (78 aa)). The UVR domain occupies 197-232 (GKAISDIKKKMKRASDSTEYELAADFRDRLKFIDQT).

This sequence belongs to the UvrC family. Interacts with UvrB in an incision complex.

The protein localises to the cytoplasm. Its function is as follows. The UvrABC repair system catalyzes the recognition and processing of DNA lesions. UvrC both incises the 5' and 3' sides of the lesion. The N-terminal half is responsible for the 3' incision and the C-terminal half is responsible for the 5' incision. In Oenococcus oeni (strain ATCC BAA-331 / PSU-1), this protein is UvrABC system protein C.